The sequence spans 60 residues: MKNPILILFTAFIALLGFFGMSAEALADPKADPLAGPNPDADPEAINLKAIAPLAKKLLG.

Residues 1–27 (MKNPILILFTAFIALLGFFGMSAEALA) form the signal peptide. AXPX repeat units follow at residues 27–30 (ADPK), 31–34 (ADPL), 35–38 (AGPN), and 41–44 (ADPE). A propeptide spanning residues 28–45 (DPKADPLAGPNPDADPEA) is cleaved from the precursor. Position 59 is a leucine amide (L59).

It belongs to the MCD family. Mastoparan subfamily. As to expression, expressed by the venom gland.

The protein localises to the secreted. Functionally, the synthetic peptide shows antimicrobial activities against Gram-negative bacteria (but not against all strains tested), Gram-positive bacteria (not all strains tested) and the fungi C.albicans and C.parapsilosis. Exhibits little hemolytic activity against washed human erythrocytes. In Vespa tropica (Greater banded hornet), this protein is Mastoparan-VT4.